The chain runs to 652 residues: Zinc finger protein 503 (652 aa).

Polar residues predominate over residues 1–11; the sequence is MSTAPSLSALR. The segment at 1–72 is disordered; the sequence is MSTAPSLSAL…HAVPPSDPLR (72 aa). Residues 16-32 are compositionally biased toward gly residues; that stretch reads SGGGGGGGGGGGSGGGS. Ser-107 bears the Phosphoserine mark. 2 disordered regions span residues 126 to 283 and 296 to 338; these read SQIG…GVPA and INVD…SSVL. Over residues 135 to 144 the composition is skewed to low complexity; it reads PSSKLSSVAS. Composition is skewed to gly residues over residues 145–157 and 194–209; these read NGGG…NGAG and GGGG…GGGV. At Lys-213 the chain carries N6-acetyllysine. The span at 221–230 shows a compositional bias: polar residues; it reads ATCQPFTPRT. A compositionally biased stretch (low complexity) spans 231 to 244; the sequence is GSPSSSASACSPGG. Residues Ser-235 and Ser-241 each carry the phosphoserine modification. Over residues 254–263 the composition is skewed to basic and acidic residues; that stretch reads EGKDDKKDPE. Positions 264 to 283 are enriched in gly residues; sequence AGGGGSSKGSGGASADGVPA. Positions 314–336 are enriched in low complexity; sequence GSDCGGSSSSSSGSGPSAPTSSS. A C2H2-type zinc finger spans residues 520–548; it reads HICNWVSANGPCDKRFATSEELLSHLRTH. Arg-642 is modified (omega-N-methylarginine).

It belongs to the Elbow/Noc family.

The protein resides in the nucleus. Functionally, may function as a transcriptional repressor. The sequence is that of Zinc finger protein 503 (Znf503) from Mus musculus (Mouse).